Here is a 393-residue protein sequence, read N- to C-terminus: MSSTSFTDLLGSSGVDCYEDDEDLRVSGSSFGGYYPERTGSGLPKFKTAQPPPLPISQSSHNFTFSDYLDSPLLLSSSHSLISPTTGTFPLQGFNGTTNNHSDFPWQLQSQPSNASSALQETYGVQDHEKKQEMIPNEIATQNNNQSFGTERQIKIPAYMVSRNSNDGYGWRKYGQKQVKKSENPRSYFKCTYPDCVSKKIVETASDGQITEIIYKGGHNHPKPEFTKRPSQSSLPSSVNGRRLFNPASVVSEPHDQSENSSISFDYSDLEQKSFKSEYGEIDEEEEQPEMKRMKREGEDEGMSIEVSKGVKEPRVVVQTISDIDVLIDGFRWRKYGQKVVKGNTNPRSYYKCTFQGCGVKKQVERSAADERAVLTTYEGRHNHDIPTALRRS.

Positions 160–224 (MVSRNSNDGY…YKGGHNHPKP (65 aa)) form a DNA-binding region, WRKY 1. 4 residues coordinate Zn(2+): Cys191, Cys196, His219, and His221. Disordered regions lie at residues 217–242 (GGHN…VNGR) and 277–303 (SEYG…DEGM). The span at 229–240 (RPSQSSLPSSVN) shows a compositional bias: polar residues. Over residues 289-298 (PEMKRMKREG) the composition is skewed to basic and acidic residues. A DNA-binding region (WRKY 2) is located at residues 322 to 387 (SDIDVLIDGF…YEGRHNHDIP (66 aa)). Cys353, Cys358, His382, and His384 together coordinate Zn(2+).

The protein belongs to the WRKY group I family. In terms of assembly, interacts with MKS1. Interacts with SIB1. Interacts with VQ10 and CAMBP25/VQ15. Phosphorylated by MPK4. Highly expressed in roots and at lower levels in leaves, stems and seeds.

It localises to the nucleus. In terms of biological role, transcription factor. Interacts specifically with the W box (5'-(T)TGAC[CT]-3'), a frequently occurring elicitor-responsive cis-acting element. Functions with WRKY33 as positive regulator of salt stress response and abscisic acid (ABA) signaling. Plays a partial role in heat stress tolerance. Functions with WRKY26 and WRKY33 as positive regulator of plant thermotolerance by partially participating in ethylene-response signal transduction pathway. This Arabidopsis thaliana (Mouse-ear cress) protein is Probable WRKY transcription factor 25 (WRKY25).